The sequence spans 257 residues: Cilia- and flagella-associated protein 300 (257 aa).

The protein belongs to the CFAP300 family.

The protein resides in the cytoplasm. It is found in the cytoskeleton. Its subcellular location is the flagellum axoneme. Cilium- and flagellum-specific protein that plays a role in axonemal structure organization and motility. Plays a role in outer and inner dynein arm assembly. The chain is Cilia- and flagella-associated protein 300 from Chlamydomonas reinhardtii (Chlamydomonas smithii).